Here is a 1633-residue protein sequence, read N- to C-terminus: D-lysergyl-peptide-synthetase subunit 3 (1633 aa).

An adenylation (A) domain region spans residues 80-483 (FRQRCDLHPD…GRKDSQIKIR (404 aa)). A Carrier domain is found at 622 to 691 (EEHRLQRMYS…RLKDLARKAS (70 aa)). Position 654 is an O-(pantetheine 4'-phosphoryl)serine (Ser-654). The condensation (C) domain stretch occupies residues 836-1127 (PLVRMKLVEG…ILGQIHGKEA (292 aa)). The tract at residues 1256–1483 (VTGASGFIGT…EYNSSAGSEW (228 aa)) is reductase (R) domain.

The protein belongs to the NRP synthetase family.

It functions in the pathway alkaloid biosynthesis; ergot alkaloid biosynthesis. Its function is as follows. D-lysergyl-peptide-synthetase subunit 3; part of the gene cluster that mediates the biosynthesis of fungal ergot alkaloid. DmaW catalyzes the first step of ergot alkaloid biosynthesis by condensing dimethylallyl diphosphate (DMAP) and tryptophan to form 4-dimethylallyl-L-tryptophan. The second step is catalyzed by the methyltransferase easF that methylates 4-dimethylallyl-L-tryptophan in the presence of S-adenosyl-L-methionine, resulting in the formation of 4-dimethylallyl-L-abrine. The catalase easC and the FAD-dependent oxidoreductase easE then transform 4-dimethylallyl-L-abrine to chanoclavine-I which is further oxidized by easD in the presence of NAD(+), resulting in the formation of chanoclavine-I aldehyde. Agroclavine dehydrogenase easG then mediates the conversion of chanoclavine-I aldehyde to agroclavine via a non-enzymatic adduct reaction: the substrate is an iminium intermediate that is formed spontaneously from chanoclavine-I aldehyde in the presence of glutathione. The presence of easA is not required to complete this reaction. Further conversion of agroclavine to paspalic acid is a two-step process involving oxidation of agroclavine to elymoclavine and of elymoclavine to paspalic acid, the second step being performed by the elymoclavine oxidase cloA. Paspalic acid is then further converted to D-lysergic acid. Ergopeptines are assembled from D-lysergic acid and three different amino acids by the D-lysergyl-peptide-synthetases composed each of a monomudular and a trimodular nonribosomal peptide synthetase subunit. LpsB and lpsC encode the monomodular subunits responsible for D-lysergic acid activation and incorporation into the ergopeptine backbone. LpsA1 and A2 subunits encode the trimodular nonribosomal peptide synthetase assembling the tripeptide portion of ergopeptines. LpsA1 is responsible for formation of the major ergopeptine, ergotamine, and lpsA2 for alpha-ergocryptine, the minor ergopeptine of the total alkaloid mixture elaborated by C.purpurea. D-lysergyl-tripeptides are assembled by the nonribosomal peptide synthetases and released as N-(D-lysergyl-aminoacyl)-lactams. Cyclolization of the D-lysergyl-tripeptides is performed by the Fe(2+)/2-ketoglutarate-dependent dioxygenase easH which introduces a hydroxyl group into N-(D-lysergyl-aminoacyl)-lactam at alpha-C of the aminoacyl residue followed by spontaneous condensation with the terminal lactam carbonyl group. This is D-lysergyl-peptide-synthetase subunit 3 from Claviceps purpurea (Ergot fungus).